Consider the following 64-residue polypeptide: Translation machinery-associated protein 7 homolog (64 aa).

The tract at residues 1-64 (MSGREGGKKK…GGGIKKSGKK (64 aa)) is disordered. Residues 27–38 (MAFKQKQKEQQK) are compositionally biased toward basic and acidic residues. A coiled-coil region spans residues 27 to 50 (MAFKQKQKEQQKALEAAKANASKK). Low complexity predominate over residues 39 to 50 (ALEAAKANASKK). Residues 53–64 (LVGGGIKKSGKK) are compositionally biased toward gly residues.

This Drosophila melanogaster (Fruit fly) protein is Translation machinery-associated protein 7 homolog.